Consider the following 474-residue polypeptide: Aspartyl/glutamyl-tRNA(Asn/Gln) amidotransferase subunit B (474 aa).

Belongs to the GatB/GatE family. GatB subfamily. As to quaternary structure, heterotrimer of A, B and C subunits.

The enzyme catalyses L-glutamyl-tRNA(Gln) + L-glutamine + ATP + H2O = L-glutaminyl-tRNA(Gln) + L-glutamate + ADP + phosphate + H(+). It carries out the reaction L-aspartyl-tRNA(Asn) + L-glutamine + ATP + H2O = L-asparaginyl-tRNA(Asn) + L-glutamate + ADP + phosphate + 2 H(+). Its function is as follows. Allows the formation of correctly charged Asn-tRNA(Asn) or Gln-tRNA(Gln) through the transamidation of misacylated Asp-tRNA(Asn) or Glu-tRNA(Gln) in organisms which lack either or both of asparaginyl-tRNA or glutaminyl-tRNA synthetases. The reaction takes place in the presence of glutamine and ATP through an activated phospho-Asp-tRNA(Asn) or phospho-Glu-tRNA(Gln). This Limosilactobacillus reuteri (strain DSM 20016) (Lactobacillus reuteri) protein is Aspartyl/glutamyl-tRNA(Asn/Gln) amidotransferase subunit B.